Here is a 218-residue protein sequence, read N- to C-terminus: Protein-L-isoaspartate O-methyltransferase 1 (218 aa).

Residue S69 is part of the active site.

This sequence belongs to the methyltransferase superfamily. L-isoaspartyl/D-aspartyl protein methyltransferase family.

The protein resides in the cytoplasm. It catalyses the reaction [protein]-L-isoaspartate + S-adenosyl-L-methionine = [protein]-L-isoaspartate alpha-methyl ester + S-adenosyl-L-homocysteine. Functionally, catalyzes the methyl esterification of L-isoaspartyl residues in peptides and proteins that result from spontaneous decomposition of normal L-aspartyl and L-asparaginyl residues. It plays a role in the repair and/or degradation of damaged proteins. This is Protein-L-isoaspartate O-methyltransferase 1 from Marinobacter nauticus (strain ATCC 700491 / DSM 11845 / VT8) (Marinobacter aquaeolei).